Here is a 316-residue protein sequence, read N- to C-terminus: Methionyl-tRNA formyltransferase (316 aa).

Ser-112–Pro-115 contributes to the (6S)-5,6,7,8-tetrahydrofolate binding site.

The protein belongs to the Fmt family.

The enzyme catalyses L-methionyl-tRNA(fMet) + (6R)-10-formyltetrahydrofolate = N-formyl-L-methionyl-tRNA(fMet) + (6S)-5,6,7,8-tetrahydrofolate + H(+). Attaches a formyl group to the free amino group of methionyl-tRNA(fMet). The formyl group appears to play a dual role in the initiator identity of N-formylmethionyl-tRNA by promoting its recognition by IF2 and preventing the misappropriation of this tRNA by the elongation apparatus. The chain is Methionyl-tRNA formyltransferase from Trichlorobacter lovleyi (strain ATCC BAA-1151 / DSM 17278 / SZ) (Geobacter lovleyi).